We begin with the raw amino-acid sequence, 501 residues long: DEAD-box ATP-dependent RNA helicase 20 (501 aa).

Basic and acidic residues-rich tracts occupy residues 1–20 (MSRY…RRSD) and 38–53 (SKKD…KLDL). The disordered stretch occupies residues 1–53 (MSRYDSRTGDSTSYRDRRSDSGFGGTSSYGSSGSHTSSKKDNDGNESPRKLDL). The Q motif motif lies at 99–127 (KSFRDVGFPDYVLEEVKKAGFTEPTPIQS). The Helicase ATP-binding domain maps to 130–305 (WPMAMKGRDL…KKFLYNPYKV (176 aa)). 143–150 (AETGSGKT) is an ATP binding site. The DEAD box motif lies at 253 to 256 (DEAD). Positions 333 to 478 (KLVKLLEDIM…KVSPELASMG (146 aa)) constitute a Helicase C-terminal domain. The interval 473 to 501 (ELASMGRSTAPPPPGLGGFRDRGSRRGWS) is disordered. Basic and acidic residues predominate over residues 491 to 501 (FRDRGSRRGWS).

This sequence belongs to the DEAD box helicase family. DDX5/DBP2 subfamily.

Its subcellular location is the nucleus. The enzyme catalyses ATP + H2O = ADP + phosphate + H(+). In terms of biological role, ATP-dependent RNA helicase involved nonsense-mediated mRNA decay and ribosome biogenesis through rRNA processing. This Arabidopsis thaliana (Mouse-ear cress) protein is DEAD-box ATP-dependent RNA helicase 20 (RH20).